The sequence spans 118 residues: Protein BEX4 (118 aa).

Residues 14–50 (VEKDKKNKKGGKASKQSEEESHHLEEVENKKPGGNVR) form a disordered region. A compositionally biased stretch (basic and acidic residues) spans 28–44 (KQSEEESHHLEEVENKK). The segment at 30–88 (SEEESHHLEEVENKKPGGNVRRKVRRLVPNFLWAIPNRHVDHSEGGEEVGRFVGQVMEA) is interaction with SIRT2. Residues 30-118 (SEEESHHLEE…DNHYDFCLIP (89 aa)) form an interaction with alpha-tubulin region. Position 115 (cysteine 115) interacts with Zn(2+).

It belongs to the BEX family. As to quaternary structure, interacts with alpha-tubulin. Interacts with SIRT2. In terms of processing, ubiquitinated and degraded by the proteasome.

The protein localises to the cytoplasm. It localises to the cytoskeleton. It is found in the spindle pole. Its subcellular location is the nucleus. Functionally, may play a role in microtubule deacetylation by negatively regulating the SIRT2 deacetylase activity toward alpha-tubulin and thereby participate in the control of cell cycle progression and genomic stability. In absence of reductive stress, acts as a pseudosubstrate for the CRL2(FEM1B) complex: associates with FEM1B via zinc, thereby preventing association between FEM1B and its substrates. In Rattus norvegicus (Rat), this protein is Protein BEX4.